Consider the following 728-residue polypeptide: Propionyl-CoA carboxylase alpha chain, mitochondrial (728 aa).

The transit peptide at 1 to 52 directs the protein to the mitochondrion; it reads MAGFWVGTAPLVAAGRRGRWPPQQLMLSAALRTLKHVLYYSRQCLMVSRNLG. The region spanning 62 to 509 is the Biotin carboxylation domain; the sequence is TFDKILVANR…STKFLSDVYP (448 aa). Lysine 65 carries the N6-acetyllysine; alternate modification. Lysine 65 bears the N6-succinyllysine; alternate mark. N6-succinyllysine is present on lysine 119. N6-acetyllysine; alternate is present on lysine 150. Lysine 150 carries the post-translational modification N6-succinyllysine; alternate. Lysine 177 is an ATP binding site. The ATP-grasp domain maps to 181-378; that stretch reads KLLAKKAEVN…LVQEMIRVAK (198 aa). Residue lysine 200 is modified to N6-acetyllysine; alternate. Lysine 200 is subject to N6-succinyllysine; alternate. Residues 209-270, glutamate 261, and asparagine 296 each bind ATP; that span reads AREI…PRHI. Serine 252 is subject to Phosphoserine. Lysine 262 carries the N6-succinyllysine modification. Position 328 is an N6-acetyllysine; alternate (lysine 328). At lysine 328 the chain carries N6-succinyllysine; alternate. Residues glutamate 336, glutamate 349, and asparagine 351 each contribute to the Mg(2+) site. Positions 336, 349, and 351 each coordinate Mn(2+). Glutamate 349 is a catalytic residue. N6-succinyllysine occurs at positions 385 and 407. Phenylalanine 409 serves as a coordination point for biotin. Lysine 496 bears the N6-acetyllysine mark. N6-succinyllysine occurs at positions 502, 513, and 648. In terms of domain architecture, Biotinyl-binding spans 653–728; sequence KVTEDTSSVL…GEGDLLVELE (76 aa). Position 694 is an N6-biotinyllysine; by HLCS (lysine 694).

As to quaternary structure, the holoenzyme is a dodecamer composed of 6 PCCA/alpha subunits and 6 PCCB/beta subunits. Interacts (via the biotin carboxylation domain) with SIRT4. Interacts with SIRT3 and SIRT5. The cofactor is Mg(2+). Mn(2+) serves as cofactor. Biotin is required as a cofactor. Post-translationally, acetylated. In terms of processing, the biotin cofactor is covalently attached to the C-terminal biotinyl-binding domain and is required for the catalytic activity. Biotinylation is catalyzed by HLCS.

It is found in the mitochondrion matrix. It catalyses the reaction propanoyl-CoA + hydrogencarbonate + ATP = (S)-methylmalonyl-CoA + ADP + phosphate + H(+). The catalysed reaction is butanoyl-CoA + hydrogencarbonate + ATP = (2S)-ethylmalonyl-CoA + ADP + phosphate + H(+). It participates in metabolic intermediate metabolism; propanoyl-CoA degradation; succinyl-CoA from propanoyl-CoA: step 1/3. This is one of the 2 subunits of the biotin-dependent propionyl-CoA carboxylase (PCC), a mitochondrial enzyme involved in the catabolism of odd chain fatty acids, branched-chain amino acids isoleucine, threonine, methionine, and valine and other metabolites. Propionyl-CoA carboxylase catalyzes the carboxylation of propionyl-CoA/propanoyl-CoA to D-methylmalonyl-CoA/(S)-methylmalonyl-CoA. Within the holoenzyme, the alpha subunit catalyzes the ATP-dependent carboxylation of the biotin carried by the biotin carboxyl carrier (BCC) domain, while the beta subunit then transfers the carboxyl group from carboxylated biotin to propionyl-CoA. Propionyl-CoA carboxylase also significantly acts on butyryl-CoA/butanoyl-CoA, which is converted to ethylmalonyl-CoA/(2S)-ethylmalonyl-CoA at a much lower rate. Other alternative minor substrates include (2E)-butenoyl-CoA/crotonoyl-CoA. This chain is Propionyl-CoA carboxylase alpha chain, mitochondrial, found in Homo sapiens (Human).